Consider the following 38-residue polypeptide: Potassium channel toxin alpha-KTx 3.12 (38 aa).

Disulfide bonds link C8–C28, C14–C33, and C18–C35. Residue K38 is modified to Lysine amide.

It belongs to the short scorpion toxin superfamily. Potassium channel inhibitor family. Alpha-KTx 03 subfamily. In terms of tissue distribution, expressed by the venom gland.

It is found in the secreted. Its function is as follows. Potent inhibitor of voltage-dependent potassium channels, with a preference for Kv1.3/KCNA3 versus Kv1.2/KCNA2. This chain is Potassium channel toxin alpha-KTx 3.12, found in Androctonus amoreuxi (African fattail scorpion).